The sequence spans 128 residues: Small ribosomal subunit protein bS6 (128 aa).

Residues 97–128 (TTPSPMMKEEKSRSLTAAPATDEAKPAEAESA) are disordered. The segment covering 118-128 (DEAKPAEAESA) has biased composition (basic and acidic residues).

The protein belongs to the bacterial ribosomal protein bS6 family.

Its function is as follows. Binds together with bS18 to 16S ribosomal RNA. This Aromatoleum aromaticum (strain DSM 19018 / LMG 30748 / EbN1) (Azoarcus sp. (strain EbN1)) protein is Small ribosomal subunit protein bS6.